Reading from the N-terminus, the 98-residue chain is NADH-ubiquinone oxidoreductase chain 4L (98 aa).

The next 3 helical transmembrane spans lie at 1 to 21 (MSLT…GLLM), 29 to 49 (SLLC…MTIL), and 61 to 81 (IILL…LVMV).

Belongs to the complex I subunit 4L family. As to quaternary structure, core subunit of respiratory chain NADH dehydrogenase (Complex I) which is composed of 45 different subunits.

The protein localises to the mitochondrion inner membrane. It carries out the reaction a ubiquinone + NADH + 5 H(+)(in) = a ubiquinol + NAD(+) + 4 H(+)(out). Its function is as follows. Core subunit of the mitochondrial membrane respiratory chain NADH dehydrogenase (Complex I) which catalyzes electron transfer from NADH through the respiratory chain, using ubiquinone as an electron acceptor. Part of the enzyme membrane arm which is embedded in the lipid bilayer and involved in proton translocation. This Stenoderma rufum (Red fruit bat) protein is NADH-ubiquinone oxidoreductase chain 4L (MT-ND4L).